Here is a 425-residue protein sequence, read N- to C-terminus: Glutamate-1-semialdehyde 2,1-aminomutase (425 aa).

Lysine 265 carries the post-translational modification N6-(pyridoxal phosphate)lysine.

It belongs to the class-III pyridoxal-phosphate-dependent aminotransferase family. HemL subfamily. Homodimer. The cofactor is pyridoxal 5'-phosphate.

The protein localises to the cytoplasm. The catalysed reaction is (S)-4-amino-5-oxopentanoate = 5-aminolevulinate. Its pathway is porphyrin-containing compound metabolism; protoporphyrin-IX biosynthesis; 5-aminolevulinate from L-glutamyl-tRNA(Glu): step 2/2. This is Glutamate-1-semialdehyde 2,1-aminomutase from Psychromonas ingrahamii (strain DSM 17664 / CCUG 51855 / 37).